The chain runs to 262 residues: Ribosomal RNA small subunit methyltransferase A (262 aa).

The S-adenosyl-L-methionine site is built by Asn-14, Leu-16, Gly-41, Glu-62, Asp-87, and Asn-109.

The protein belongs to the class I-like SAM-binding methyltransferase superfamily. rRNA adenine N(6)-methyltransferase family. RsmA subfamily.

The protein localises to the cytoplasm. The catalysed reaction is adenosine(1518)/adenosine(1519) in 16S rRNA + 4 S-adenosyl-L-methionine = N(6)-dimethyladenosine(1518)/N(6)-dimethyladenosine(1519) in 16S rRNA + 4 S-adenosyl-L-homocysteine + 4 H(+). In terms of biological role, specifically dimethylates two adjacent adenosines (A1518 and A1519) in the loop of a conserved hairpin near the 3'-end of 16S rRNA in the 30S particle. May play a critical role in biogenesis of 30S subunits. The protein is Ribosomal RNA small subunit methyltransferase A of Francisella tularensis subsp. novicida (strain U112).